The primary structure comprises 49 residues: Osteocalcin (49 aa).

Residues 1–47 (YLDPGLGAPAPYPDPLEPKREVCELNPDCDELADHIGFQEAYRRFYG) enclose the Gla domain. Proline 9 bears the Hydroxyproline mark. Glutamate 17, glutamate 21, glutamate 24, and aspartate 30 together coordinate Ca(2+). Glutamate 17, glutamate 21, and glutamate 24 each carry 4-carboxyglutamate. A disulfide bridge links cysteine 23 with cysteine 29.

It belongs to the osteocalcin/matrix Gla protein family. Gamma-carboxyglutamate residues are formed by vitamin K dependent carboxylation by GGCX. These residues are essential for the binding of calcium. Decarboxylation promotes the hormone activity.

The protein resides in the secreted. In terms of biological role, the carboxylated form is one of the main organic components of the bone matrix, which constitutes 1-2% of the total bone protein. It acts as a negative regulator of bone formation and is required to limit bone formation without impairing bone resorption or mineralization. The carboxylated form binds strongly to apatite and calcium. Functionally, the uncarboxylated form acts as a hormone secreted by osteoblasts, which regulates different cellular processes, such as energy metabolism, male fertility and brain development. Regulates of energy metabolism by acting as a hormone favoring pancreatic beta-cell proliferation, insulin secretion and sensitivity and energy expenditure. Uncarboxylated osteocalcin hormone also promotes testosterone production in the testes: acts as a ligand for G protein-coupled receptor GPRC6A at the surface of Leydig cells, initiating a signaling response that promotes the expression of enzymes required for testosterone synthesis in a CREB-dependent manner. Also acts as a regulator of brain development: osteocalcin hormone crosses the blood-brain barrier and acts as a ligand for GPR158 on neurons, initiating a signaling response that prevents neuronal apoptosis in the hippocampus, favors the synthesis of all monoamine neurotransmitters and inhibits that of gamma-aminobutyric acid (GABA). Osteocalcin also crosses the placenta during pregnancy and maternal osteocalcin is required for fetal brain development. The chain is Osteocalcin (BGLAP) from Capra hircus (Goat).